We begin with the raw amino-acid sequence, 264 residues long: Proteasome subunit alpha type-4 (264 aa).

This sequence belongs to the peptidase T1A family. The 26S proteasome consists of a 20S proteasome core and two 19S regulatory subunits. The 20S proteasome core is composed of 28 subunits that are arranged in four stacked rings, resulting in a barrel-shaped structure. The two end rings are each formed by seven alpha subunits, and the two central rings are each formed by seven beta subunits. The catalytic chamber with the active sites is on the inside of the barrel. Interacts with PI31.

The protein localises to the cytoplasm. It is found in the nucleus. The proteasome is a multicatalytic proteinase complex which is characterized by its ability to cleave peptides with Arg, Phe, Tyr, Leu, and Glu adjacent to the leaving group at neutral or slightly basic pH. The proteasome has an ATP-dependent proteolytic activity. This Drosophila melanogaster (Fruit fly) protein is Proteasome subunit alpha type-4 (Prosalpha3).